Consider the following 88-residue polypeptide: Phosphocarrier protein HPr (88 aa).

One can recognise an HPr domain in the interval 1–88; that stretch reads MEQNSYVIID…DVLSKEGLTK (88 aa). Catalysis depends on histidine 15, which acts as the Pros-phosphohistidine intermediate. Serine 46 carries the post-translational modification Phosphoserine; by HPrK/P.

It localises to the cytoplasm. Its activity is regulated as follows. Phosphorylation on Ser-46 inhibits the phosphoryl transfer from enzyme I to HPr. Functionally, general (non sugar-specific) component of the phosphoenolpyruvate-dependent sugar phosphotransferase system (sugar PTS). This major carbohydrate active-transport system catalyzes the phosphorylation of incoming sugar substrates concomitantly with their translocation across the cell membrane. The phosphoryl group from phosphoenolpyruvate (PEP) is transferred to the phosphoryl carrier protein HPr by enzyme I. Phospho-HPr then transfers it to the PTS EIIA domain. In terms of biological role, P-Ser-HPr interacts with the catabolite control protein A (CcpA), forming a complex that binds to DNA at the catabolite response elements cre, operator sites preceding a large number of catabolite-regulated genes. Thus, P-Ser-HPr is a corepressor in carbon catabolite repression (CCR), a mechanism that allows bacteria to coordinate and optimize the utilization of available carbon sources. P-Ser-HPr also plays a role in inducer exclusion, in which it probably interacts with several non-PTS permeases and inhibits their transport activity. The chain is Phosphocarrier protein HPr (ptsH) from Staphylococcus aureus (strain MSSA476).